The chain runs to 161 residues: Lipoprotein signal peptidase (161 aa).

Transmembrane regions (helical) follow at residues 4–24, 61–81, and 87–107; these read LLVV…WSKY, KMIF…YLLI, and SIWY…NFID. Active-site residues include aspartate 116 and aspartate 132. The chain crosses the membrane as a helical span at residues 127 to 147; that stretch reads IFNVADSTLVVGVICIFIYLI.

It belongs to the peptidase A8 family.

Its subcellular location is the cell membrane. It carries out the reaction Release of signal peptides from bacterial membrane prolipoproteins. Hydrolyzes -Xaa-Yaa-Zaa-|-(S,diacylglyceryl)Cys-, in which Xaa is hydrophobic (preferably Leu), and Yaa (Ala or Ser) and Zaa (Gly or Ala) have small, neutral side chains.. It functions in the pathway protein modification; lipoprotein biosynthesis (signal peptide cleavage). Its function is as follows. This protein specifically catalyzes the removal of signal peptides from prolipoproteins. The protein is Lipoprotein signal peptidase of Enterococcus faecalis (strain ATCC 700802 / V583).